Here is a 139-residue protein sequence, read N- to C-terminus: Histone H2AX (139 aa).

2 disordered regions span residues 1 to 21 and 119 to 139; these read MSGRGKAVSKTRAKAKTRSSR and KKSSGGVSTSGKKSSQQSQEY. Ser-2 is subject to N-acetylserine. Ser-2 bears the Phosphoserine mark. A compositionally biased stretch (basic residues) spans 7–19; sequence AVSKTRAKAKTRS. At Lys-10 the chain carries N6-lactoyllysine; alternate. Glycyl lysine isopeptide (Lys-Gly) (interchain with G-Cter in ubiquitin) cross-links involve residues Lys-14, Lys-16, and Lys-120. Ser-136 carries the phosphoserine modification. Residues 136-137 carry the [ST]-Q motif motif; the sequence is SQ. At Tyr-139 the chain carries Phosphotyrosine; by WSTF.

Belongs to the histone H2A family. As to quaternary structure, the nucleosome is a histone octamer containing two molecules each of H2A, H2B, H3 and H4 assembled in one H3-H4 heterotetramer and two H2A-H2B heterodimers. The octamer wraps approximately 147 bp of DNA. Interacts with numerous proteins required for DNA damage signaling and repair when phosphorylated on Ser-136. In terms of processing, phosphorylated. Phosphorylation of Ser-136 (H2AX139ph) occurs in response to DNA double strand breaks (DSBs) generated by exogenous genotoxic agents, by stalled replication forks and by meiotic recombination events. Phosphorylation is dependent on the DNA damage checkpoint kinases ATR and ATM, spreads on either side of a detected DSB site and may mark the surrounding chromatin for recruitment of proteins required for DNA damage signaling and repair. Widespread phosphorylation may also serve to amplify the damage signal or aid repair of persistent lesions. Dephosphorylation of Ser-136 is required for DNA DSB repair. Phosphorylation at Tyr-139 (H2AXY142ph) by baz1b/wstf determines the relative recruitment of either DNA repair or pro-apoptotic factors. Phosphorylation at Tyr-139 (H2AXY142ph) favors the recruitment of pro-apoptosis factors. In contrast, dephosphorylation of Tyr-139 by EYA proteins (eya1, eya2, eya3 or eya4) favors the recruitment of MDC1-containing DNA repair complexes to the tail of phosphorylated Ser-136 (H2AX139ph). Phosphorylated by VRK1. Post-translationally, monoubiquitination of Lys-120 (H2AXK119ub) by ring1 and rnf2/ring2 complex gives a specific tag for epigenetic transcriptional repression. Following DNA double-strand breaks (DSBs), it is ubiquitinated through 'Lys-63' linkage of ubiquitin moieties by the E2 ligase ube2n and the E3 ligases rnf8 and rnf168, leading to the recruitment of repair proteins to sites of DNA damage. Ubiquitination at Lys-14 and Lys-16 (H2AK13Ub and H2AK15Ub, respectively) in response to DNA damage is initiated by rnf168 that mediates monoubiquitination at these 2 sites, and 'Lys-63'-linked ubiquitin are then conjugated to monoubiquitin; rnf8 is able to extend 'Lys-63'-linked ubiquitin chains in vitro. H2AK119Ub and ionizing radiation-induced 'Lys-63'-linked ubiquitination (H2AK13Ub and H2AK15Ub) are distinct events.

The protein resides in the nucleus. The protein localises to the chromosome. Its function is as follows. Variant histone H2A which replaces conventional H2A in a subset of nucleosomes. Nucleosomes wrap and compact DNA into chromatin, limiting DNA accessibility to the cellular machineries which require DNA as a template. Histones thereby play a central role in transcription regulation, DNA repair, DNA replication and chromosomal stability. DNA accessibility is regulated via a complex set of post-translational modifications of histones, also called histone code, and nucleosome remodeling. Required for checkpoint-mediated arrest of cell cycle progression in response to low doses of ionizing radiation and for efficient repair of DNA double strand breaks (DSBs) specifically when modified by C-terminal phosphorylation. This is Histone H2AX (h2ax) from Xenopus laevis (African clawed frog).